The chain runs to 217 residues: Probable transaldolase (217 aa).

Lys83 serves as the catalytic Schiff-base intermediate with substrate.

Belongs to the transaldolase family. Type 3B subfamily.

It localises to the cytoplasm. The enzyme catalyses D-sedoheptulose 7-phosphate + D-glyceraldehyde 3-phosphate = D-erythrose 4-phosphate + beta-D-fructose 6-phosphate. It participates in carbohydrate degradation; pentose phosphate pathway; D-glyceraldehyde 3-phosphate and beta-D-fructose 6-phosphate from D-ribose 5-phosphate and D-xylulose 5-phosphate (non-oxidative stage): step 2/3. Functionally, transaldolase is important for the balance of metabolites in the pentose-phosphate pathway. This Caulobacter sp. (strain K31) protein is Probable transaldolase.